The sequence spans 374 residues: Probable ethanolamine kinase (374 aa).

ATP-binding residues include Arg93 and Asp252.

The protein belongs to the choline/ethanolamine kinase family.

It carries out the reaction ethanolamine + ATP = phosphoethanolamine + ADP + H(+). The protein operates within phospholipid metabolism; phosphatidylethanolamine biosynthesis; phosphatidylethanolamine from ethanolamine: step 1/3. Involved in phospholipid biosynthesis. Catalyzes the first step in phosphatidylethanolamine biosynthesis. This is Probable ethanolamine kinase (EMB1187) from Arabidopsis thaliana (Mouse-ear cress).